A 616-amino-acid chain; its full sequence is MALLQISEPGLSAAPHQRRLAAGIDLGTTNSLVATVRSGQAETLPDHEGRHLLPSVVHYQQQGHTVGYAARDNAAQDTTNTISSVKRMMGRSLADIQARYPHLPYRFKASVNGLPMIDTAAGLLNPVRVSADILKALAARASESLSGELDGVVITVPAYFDDAQRQGTKDAARLAGLHVLRLLNEPTAAAIAYGLDSGKEGVIAVYDLGGGTFDISILRLSRGVFEVLATGGDSALGGDDFDHLLADYIREQAGIADRSDNRVQRELLDAAIAAKIALSDADTVRVNVAGWQGEITREQFNDLISALVKRTLLACRRALKDAGVDPQDVLEVVMVGGSTRVPLVRERVGEFFGRTPLTAIDPDKVVAIGAAIQADILVGNKPDSEMLLLDVIPLSLGLETMGGLVEKVIPRNTTIPVARAQDFTTFKDGQTAMSIHVMQGERELVQDCRSLARFALRGIPPLPAGGAHIRVTFQVDADGLLSVTAMEKSTGVEASIQVKPSYGLTDGEIASMIKDSMSFAEQDVKARMLAEQKVEAARVLESLTGALTADAALLSAAERQCIDDAAAHLSAVAQGDDVDAIEQAIKNVDKQTQEFAARRMDQSVRRALKGHSVDEV.

The protein belongs to the heat shock protein 70 family.

Its function is as follows. Chaperone involved in the maturation of iron-sulfur cluster-containing proteins. Has a low intrinsic ATPase activity which is markedly stimulated by HscB. Involved in the maturation of IscU. This Salmonella paratyphi B (strain ATCC BAA-1250 / SPB7) protein is Chaperone protein HscA.